We begin with the raw amino-acid sequence, 330 residues long: MKKTVFSGIQPSGTLTLGNYLGAMKHFVSLQEDYNCYFCIVDQHAITVPQDRLKLRENIRSLAALYLAVGIDPSKATLFIQSEVPAHAQLGWMMQCVSYIGELERMTQFKDKSDGKEAVSASLLTYPPLMAADILLYHTNIVPVGEDQKQHLELTRDLAERFNKKYNDIFTIPEVQIPKVGARIMSLNDPSKKMSKSNPNPKSYISMLDDEKTITKKIKSAVTDSDGIVKFDKENKPAISNLLSIYSLCKGASIEEVEAQFVGKGYGEFKESLAQVVVDTLKPIQERYEQLIQSEELDHILDQGADKANRVARKTLEKAERAMGLGRKRR.

ATP-binding positions include 10 to 12 (QPS) and 18 to 19 (GN). Positions 11–19 (PSGTLTLGN) match the 'HIGH' region motif. L-tryptophan is bound at residue aspartate 133. Residues 145–147 (GED), isoleucine 184, and 193–197 (KMSKS) each bind ATP. A 'KMSKS' region motif is present at residues 193 to 197 (KMSKS).

Belongs to the class-I aminoacyl-tRNA synthetase family. In terms of assembly, homodimer.

Its subcellular location is the cytoplasm. The catalysed reaction is tRNA(Trp) + L-tryptophan + ATP = L-tryptophyl-tRNA(Trp) + AMP + diphosphate + H(+). Catalyzes the attachment of tryptophan to tRNA(Trp). In Halalkalibacterium halodurans (strain ATCC BAA-125 / DSM 18197 / FERM 7344 / JCM 9153 / C-125) (Bacillus halodurans), this protein is Tryptophan--tRNA ligase.